A 116-amino-acid polypeptide reads, in one-letter code: ATP-dependent Clp protease adapter protein ClpS (116 aa).

Residues 1-11 (MRRINTIMQGK) show a composition bias toward polar residues. Positions 1 to 23 (MRRINTIMQGKTNGGNGPESGTV) are disordered.

It belongs to the ClpS family. In terms of assembly, binds to the N-terminal domain of the chaperone ClpA.

Involved in the modulation of the specificity of the ClpAP-mediated ATP-dependent protein degradation. The sequence is that of ATP-dependent Clp protease adapter protein ClpS from Brucella abortus (strain S19).